The primary structure comprises 215 residues: Cytochrome b6 (215 aa).

The helical transmembrane segment at 32–52 threads the bilayer; that stretch reads IFYCFGGITLTCFLIQVATGF. Cys35 contributes to the heme c binding site. Heme b is bound by residues His86 and His100. 3 consecutive transmembrane segments (helical) span residues 90–110, 116–136, and 186–206; these read ASMM…TGGF, LTWV…VTGY, and LHTF…FLMI. Heme b-binding residues include His187 and His202.

This sequence belongs to the cytochrome b family. PetB subfamily. In terms of assembly, the 4 large subunits of the cytochrome b6-f complex are cytochrome b6, subunit IV (17 kDa polypeptide, PetD), cytochrome f and the Rieske protein, while the 4 small subunits are PetG, PetL, PetM and PetN. The complex functions as a dimer. Heme b serves as cofactor. It depends on heme c as a cofactor.

The protein localises to the plastid. The protein resides in the chloroplast thylakoid membrane. Component of the cytochrome b6-f complex, which mediates electron transfer between photosystem II (PSII) and photosystem I (PSI), cyclic electron flow around PSI, and state transitions. The chain is Cytochrome b6 from Nephroselmis olivacea (Green alga).